We begin with the raw amino-acid sequence, 493 residues long: Transcript termination protein A18 (493 aa).

Residues methionine 100–serine 256 enclose the Helicase ATP-binding domain. Leucine 113 to threonine 120 provides a ligand contact to ATP. The short motif at aspartate 206–histidine 209 is the DESH box element. The region spanning isoleucine 309–glycine 456 is the Helicase C-terminal domain.

This sequence belongs to the helicase family. Poxviruses subfamily. As to quaternary structure, interacts with G2. Might be part of a transcription complex composed at least of G2, A18, and H5.

It localises to the virion. DNA helicase which seems to act as a postreplicative transcription termination factor. Involved in ATP-dependent release of nascent RNA. Forms a stable complex with single-stranded DNA, and to a lesser extent RNA. The sequence is that of Transcript termination protein A18 from Mus musculus (Mouse).